The chain runs to 119 residues: Small ribosomal subunit protein bS6 (119 aa).

Belongs to the bacterial ribosomal protein bS6 family.

In terms of biological role, binds together with bS18 to 16S ribosomal RNA. The polypeptide is Small ribosomal subunit protein bS6 (Buchnera aphidicola subsp. Baizongia pistaciae (strain Bp)).